The primary structure comprises 325 residues: Retinal homeobox protein Rx-B (325 aa).

Residues 32–39 carry the Octapeptide motif motif; it reads HSIEAILG. Basic and acidic residues predominate over residues 75–87; that stretch reads TEEIHPQQEHLED. Residues 75 to 136 are disordered; it reads TEEIHPQQEH…KKKHRRNRTT (62 aa). Positions 99–117 are enriched in polar residues; it reads AKTSSECLSPGLSTSNSDN. The homeobox DNA-binding region spans 130 to 189; it reads HRRNRTTFTTYQLHELERAFEKSHYPDVYSREELAMKVNLPEVRVQVWFQNRRAKWRRQE. The short motif at 302-315 is the OAR element; the sequence is NSIASLRMKAKEHI. The short motif at 308–312 is the Nuclear localization signal element; the sequence is RMKAK.

This sequence belongs to the paired homeobox family. Bicoid subfamily. Highly expressed in anterior neural plate followed by neural retina, pigmented epithelium, in pineal gland, diencephalon floor and epiphysis. At later stages, the neuroretina remains the primary site of expression. No expression in the developing lens and cornea.

It localises to the nucleus. Plays a critical role in eye formation by regulating the initial specification of retinal cells and/or their subsequent proliferation. The chain is Retinal homeobox protein Rx-B (rax-b) from Xenopus laevis (African clawed frog).